The chain runs to 194 residues: Small ribosomal subunit protein uS4 (194 aa).

An N6-acetyllysine modification is found at Lys66. Lys93 is covalently cross-linked (Glycyl lysine isopeptide (Lys-Gly) (interchain with G-Cter in SUMO2)). Residues 108–182 (RRLQTQVFKL…VKRKNAKKGQ (75 aa)) form the S4 RNA-binding domain. Lys116 is subject to N6-acetyllysine. Lys139 participates in a covalent cross-link: Glycyl lysine isopeptide (Lys-Gly) (interchain with G-Cter in SUMO2). Position 153 is a phosphoserine (Ser153). Lys155 bears the N6-acetyllysine mark. Residues 162-194 (RSPYGGGRPGRVKRKNAKKGQGGAGAGDDEEED) form a disordered region. Ser163 is modified (phosphoserine).

The protein belongs to the universal ribosomal protein uS4 family. As to quaternary structure, component of the small ribosomal subunit. Part of the small subunit (SSU) processome, composed of more than 70 proteins and the RNA chaperone small nucleolar RNA (snoRNA) U3.

The protein localises to the cytoplasm. Its subcellular location is the nucleus. It is found in the nucleolus. Functionally, component of the small ribosomal subunit. The ribosome is a large ribonucleoprotein complex responsible for the synthesis of proteins in the cell. Part of the small subunit (SSU) processome, first precursor of the small eukaryotic ribosomal subunit. During the assembly of the SSU processome in the nucleolus, many ribosome biogenesis factors, an RNA chaperone and ribosomal proteins associate with the nascent pre-rRNA and work in concert to generate RNA folding, modifications, rearrangements and cleavage as well as targeted degradation of pre-ribosomal RNA by the RNA exosome. The sequence is that of Small ribosomal subunit protein uS4 (RPS9) from Papio anubis (Olive baboon).